Reading from the N-terminus, the 341-residue chain is Elongation factor Ts (341 aa).

An involved in Mg(2+) ion dislocation from EF-Tu region spans residues 80-83 (TDFV).

Belongs to the EF-Ts family.

It localises to the cytoplasm. Its function is as follows. Associates with the EF-Tu.GDP complex and induces the exchange of GDP to GTP. It remains bound to the aminoacyl-tRNA.EF-Tu.GTP complex up to the GTP hydrolysis stage on the ribosome. The polypeptide is Elongation factor Ts (Lactobacillus acidophilus (strain ATCC 700396 / NCK56 / N2 / NCFM)).